The sequence spans 223 residues: Probable transaldolase (223 aa).

Lysine 86 acts as the Schiff-base intermediate with substrate in catalysis.

The protein belongs to the transaldolase family. Type 3B subfamily.

It is found in the cytoplasm. The catalysed reaction is D-sedoheptulose 7-phosphate + D-glyceraldehyde 3-phosphate = D-erythrose 4-phosphate + beta-D-fructose 6-phosphate. It functions in the pathway carbohydrate degradation; pentose phosphate pathway; D-glyceraldehyde 3-phosphate and beta-D-fructose 6-phosphate from D-ribose 5-phosphate and D-xylulose 5-phosphate (non-oxidative stage): step 2/3. Its function is as follows. Transaldolase is important for the balance of metabolites in the pentose-phosphate pathway. In Thermoplasma acidophilum (strain ATCC 25905 / DSM 1728 / JCM 9062 / NBRC 15155 / AMRC-C165), this protein is Probable transaldolase (tal).